Reading from the N-terminus, the 889-residue chain is Protein translocase subunit SecA (889 aa).

ATP is bound by residues glutamine 87, 105–109, and aspartate 494; that span reads GEGKT. A disordered region spans residues 823–889; it reads ESLRPEEADL…RMDKDTKGKR (67 aa). The segment covering 867 to 889 has biased composition (basic and acidic residues); the sequence is PRDDRPMNREERRRMDKDTKGKR.

Belongs to the SecA family. Monomer and homodimer. Part of the essential Sec protein translocation apparatus which comprises SecA, SecYEG and auxiliary proteins SecDF-YajC and YidC.

Its subcellular location is the cell inner membrane. The protein resides in the cytoplasm. The catalysed reaction is ATP + H2O + cellular proteinSide 1 = ADP + phosphate + cellular proteinSide 2.. In terms of biological role, part of the Sec protein translocase complex. Interacts with the SecYEG preprotein conducting channel. Has a central role in coupling the hydrolysis of ATP to the transfer of proteins into and across the cell membrane, serving as an ATP-driven molecular motor driving the stepwise translocation of polypeptide chains across the membrane. The protein is Protein translocase subunit SecA of Bdellovibrio bacteriovorus (strain ATCC 15356 / DSM 50701 / NCIMB 9529 / HD100).